The following is a 453-amino-acid chain: Bifunctional protein GlmU (453 aa).

Residues 1-228 (MPHWAAVIMA…VHEALGINSR (228 aa)) form a pyrophosphorylase region. UDP-N-acetyl-alpha-D-glucosamine is bound by residues Lys-23, Gln-73, 78 to 79 (GT), 100 to 102 (SGD), Gly-139, Glu-153, Asn-168, and Asn-226. Residue Asp-102 coordinates Mg(2+). Asn-226 is a binding site for Mg(2+). Residues 229–249 (AQLAAAEDVARQRILSYWMEE) are linker. The tract at residues 250 to 453 (GVTIIDPRST…IENWVRNKKK (204 aa)) is N-acetyltransferase. UDP-N-acetyl-alpha-D-glucosamine-binding residues include Arg-331 and Lys-349. Catalysis depends on His-361, which acts as the Proton acceptor. Residues Tyr-364 and Asn-375 each coordinate UDP-N-acetyl-alpha-D-glucosamine. Acetyl-CoA contacts are provided by residues Ala-378, 384 to 385 (NY), Ser-403, Ala-421, and Arg-438.

In the N-terminal section; belongs to the N-acetylglucosamine-1-phosphate uridyltransferase family. The protein in the C-terminal section; belongs to the transferase hexapeptide repeat family. Homotrimer. Mg(2+) is required as a cofactor.

Its subcellular location is the cytoplasm. The catalysed reaction is alpha-D-glucosamine 1-phosphate + acetyl-CoA = N-acetyl-alpha-D-glucosamine 1-phosphate + CoA + H(+). The enzyme catalyses N-acetyl-alpha-D-glucosamine 1-phosphate + UTP + H(+) = UDP-N-acetyl-alpha-D-glucosamine + diphosphate. It functions in the pathway nucleotide-sugar biosynthesis; UDP-N-acetyl-alpha-D-glucosamine biosynthesis; N-acetyl-alpha-D-glucosamine 1-phosphate from alpha-D-glucosamine 6-phosphate (route II): step 2/2. The protein operates within nucleotide-sugar biosynthesis; UDP-N-acetyl-alpha-D-glucosamine biosynthesis; UDP-N-acetyl-alpha-D-glucosamine from N-acetyl-alpha-D-glucosamine 1-phosphate: step 1/1. Its pathway is bacterial outer membrane biogenesis; LPS lipid A biosynthesis. Catalyzes the last two sequential reactions in the de novo biosynthetic pathway for UDP-N-acetylglucosamine (UDP-GlcNAc). The C-terminal domain catalyzes the transfer of acetyl group from acetyl coenzyme A to glucosamine-1-phosphate (GlcN-1-P) to produce N-acetylglucosamine-1-phosphate (GlcNAc-1-P), which is converted into UDP-GlcNAc by the transfer of uridine 5-monophosphate (from uridine 5-triphosphate), a reaction catalyzed by the N-terminal domain. The sequence is that of Bifunctional protein GlmU from Desulfitobacterium hafniense (strain Y51).